The following is a 734-amino-acid chain: ATP-dependent RNA helicase SUV3L, mitochondrial (734 aa).

Residues 1–60 (MAAAAAIAAALLRRSTSSQHHRRILLLPLLSHLQRAAPRSPSPWDPPPHHRFFFSSDVTA) constitute a mitochondrion transit peptide. Residues 58–88 (VTAEGDSKPRPPLDGKQLWREVSTSEPATGA) form a disordered region. Positions 62-76 (GDSKPRPPLDGKQLW) are enriched in basic and acidic residues. Positions 198 to 356 (FARAMRRRVV…RFKPLVVEAK (159 aa)) constitute a Helicase ATP-binding domain. 211–218 (GPTNSGKT) lines the ATP pocket. One can recognise a Helicase C-terminal domain in the interval 357–525 (TLLGDLKNVR…SFAIQFPDLT (169 aa)). N-linked (GlcNAc...) asparagine glycosylation is found at Asn-594 and Asn-614. A disordered region spans residues 667 to 734 (ASWKPTSRQQ…QDPSSLNFVA (68 aa)). The segment covering 684–693 (EEDNDVEQAS) has biased composition (acidic residues). Residues 695-709 (DNAKNDSEDGYERSI) are compositionally biased toward basic and acidic residues. Asn-699 carries an N-linked (GlcNAc...) asparagine glycan. Residues 725-734 (QDPSSLNFVA) show a composition bias toward polar residues.

The protein belongs to the helicase family. In terms of assembly, homodimer; in free form. Component of the mitochondrial degradosome (mtEXO) complex which is a heteropentamer containing 2 copies of SUPV3L1 and 3 copies of PNPT1. The cofactor is Mg(2+). Mn(2+) serves as cofactor.

It localises to the nucleus. Its subcellular location is the mitochondrion matrix. It is found in the mitochondrion nucleoid. The enzyme catalyses ATP + H2O = ADP + phosphate + H(+). Its function is as follows. Major helicase player in mitochondrial RNA metabolism. Component of the mitochondrial degradosome (mtEXO) complex, that degrades 3' overhang double-stranded RNA with a 3'-to-5' directionality in an ATP-dependent manner. ATPase and ATP-dependent multisubstrate helicase, able to unwind double-stranded (ds) DNA and RNA, and RNA/DNA heteroduplexes in the 5'-to-3' direction. Plays a role in the RNA surveillance system in mitochondria; regulates the stability of mature mRNAs, the removal of aberrantly formed mRNAs and the rapid degradation of non coding processing intermediates. Confers salinity and drought stress tolerances by maintaining both photosynthesis and antioxidant machinery, probably via an increase in plant hormones levels such as gibberellic acid (GA(3)), the cytokinin zeatin (Z) and indole-3-acetic acid (IAA). This is ATP-dependent RNA helicase SUV3L, mitochondrial from Oryza sativa subsp. japonica (Rice).